Consider the following 173-residue polypeptide: Photosystem I assembly protein Ycf3 (173 aa).

TPR repeat units follow at residues 35–68 (AFSY…EEDP), 72–105 (SYIL…NFKL), and 120–153 (GVQA…APDN).

Belongs to the Ycf3 family.

The protein localises to the plastid. It is found in the chloroplast thylakoid membrane. Essential for the assembly of the photosystem I (PSI) complex. May act as a chaperone-like factor to guide the assembly of the PSI subunits. The sequence is that of Photosystem I assembly protein Ycf3 from Porphyra purpurea (Red seaweed).